A 567-amino-acid polypeptide reads, in one-letter code: Membrane protein insertase YidC (567 aa).

A helical membrane pass occupies residues Ile3–Trp23. The segment at Thr32 to Asn80 is disordered. Low complexity predominate over residues Ser40–Asp52. Polar residues predominate over residues Glu70–Asn80. 5 helical membrane passes run Phe354 to Leu374, Trp378 to Ala398, Gly445 to Phe465, Met485 to Leu505, and Pro522 to Val542.

Belongs to the OXA1/ALB3/YidC family. Type 1 subfamily. In terms of assembly, interacts with the Sec translocase complex via SecD. Specifically interacts with transmembrane segments of nascent integral membrane proteins during membrane integration.

The protein localises to the cell inner membrane. In terms of biological role, required for the insertion and/or proper folding and/or complex formation of integral membrane proteins into the membrane. Involved in integration of membrane proteins that insert both dependently and independently of the Sec translocase complex, as well as at least some lipoproteins. Aids folding of multispanning membrane proteins. This is Membrane protein insertase YidC from Marinobacter nauticus (strain ATCC 700491 / DSM 11845 / VT8) (Marinobacter aquaeolei).